The following is a 506-amino-acid chain: Trans-cinnamate 4-monooxygenase C4H1 (506 aa).

2 consecutive short sequence motifs (nuclear localization signal) follow at residues 161 to 168 and 247 to 254; these read VKKMPESA and QRRLQLFK. Cys448 serves as a coordination point for heme.

This sequence belongs to the cytochrome P450 family. Heme is required as a cofactor.

It is found in the nucleus. It catalyses the reaction (E)-cinnamate + reduced [NADPH--hemoprotein reductase] + O2 = (E)-4-coumarate + oxidized [NADPH--hemoprotein reductase] + H2O + H(+). The protein operates within phenylpropanoid metabolism; trans-4-coumarate biosynthesis; trans-4-coumarate from trans-cinnamate: step 1/1. Functionally, component of the floral volatile benzenoid/phenylpropanoid (FVBP) biosynthetic pathway that controls carbon flux to pigments essential for pollination or UV protection, to numerous pytoalexins synthesized by plants when challenged by pathogens, and to lignins. In Petunia hybrida (Petunia), this protein is Trans-cinnamate 4-monooxygenase C4H1.